We begin with the raw amino-acid sequence, 189 residues long: Elongation factor P (189 aa).

Belongs to the elongation factor P family.

It is found in the cytoplasm. The protein operates within protein biosynthesis; polypeptide chain elongation. Its function is as follows. Involved in peptide bond synthesis. Stimulates efficient translation and peptide-bond synthesis on native or reconstituted 70S ribosomes in vitro. Probably functions indirectly by altering the affinity of the ribosome for aminoacyl-tRNA, thus increasing their reactivity as acceptors for peptidyl transferase. In Pseudomonas putida (strain ATCC 700007 / DSM 6899 / JCM 31910 / BCRC 17059 / LMG 24140 / F1), this protein is Elongation factor P.